A 976-amino-acid chain; its full sequence is Leucine--tRNA ligase (976 aa).

Residues 1–23 (MTESPTTTPGSTSGAPSGVPSGV) are compositionally biased toward low complexity. Residues 1 to 34 (MTESPTTTPGSTSGAPSGVPSGVNDAESDAPRHR) form a disordered region. The 'HIGH' region motif lies at 86 to 97 (PYPSGEGLHVGH). The short motif at 745 to 749 (KIGKS) is the 'KMSKS' region element. An ATP-binding site is contributed by Lys748.

Belongs to the class-I aminoacyl-tRNA synthetase family.

It is found in the cytoplasm. It catalyses the reaction tRNA(Leu) + L-leucine + ATP = L-leucyl-tRNA(Leu) + AMP + diphosphate. This is Leucine--tRNA ligase from Mycobacterium ulcerans (strain Agy99).